A 224-amino-acid chain; its full sequence is Ribose-5-phosphate isomerase A (224 aa).

Substrate is bound by residues 32 to 35 (TGST), 85 to 88 (DGAD), and 98 to 101 (KGGG). Glu-107 (proton acceptor) is an active-site residue. A substrate-binding site is contributed by Lys-125.

It belongs to the ribose 5-phosphate isomerase family. As to quaternary structure, homodimer.

It carries out the reaction aldehydo-D-ribose 5-phosphate = D-ribulose 5-phosphate. It functions in the pathway carbohydrate degradation; pentose phosphate pathway; D-ribose 5-phosphate from D-ribulose 5-phosphate (non-oxidative stage): step 1/1. Catalyzes the reversible conversion of ribose-5-phosphate to ribulose 5-phosphate. This Pseudomonas entomophila (strain L48) protein is Ribose-5-phosphate isomerase A.